Here is a 317-residue protein sequence, read N- to C-terminus: Methionyl-tRNA formyltransferase (317 aa).

110–113 (SLLP) serves as a coordination point for (6S)-5,6,7,8-tetrahydrofolate. Residues 292–317 (RMKGEDFVRGKNVQPGDVLGEANEEN) are disordered.

Belongs to the Fmt family.

The catalysed reaction is L-methionyl-tRNA(fMet) + (6R)-10-formyltetrahydrofolate = N-formyl-L-methionyl-tRNA(fMet) + (6S)-5,6,7,8-tetrahydrofolate + H(+). Its function is as follows. Attaches a formyl group to the free amino group of methionyl-tRNA(fMet). The formyl group appears to play a dual role in the initiator identity of N-formylmethionyl-tRNA by promoting its recognition by IF2 and preventing the misappropriation of this tRNA by the elongation apparatus. This chain is Methionyl-tRNA formyltransferase, found in Bacillus velezensis (strain DSM 23117 / BGSC 10A6 / LMG 26770 / FZB42) (Bacillus amyloliquefaciens subsp. plantarum).